The following is a 672-amino-acid chain: Cytadherence high molecular weight protein 3 (672 aa).

25 repeat units span residues 98 to 100 (YDQ), 106 to 108 (YDQ), 160 to 162 (PVV), 197 to 199 (YDQ), 206 to 208 (YDQ), 211 to 213 (YDQ), 221 to 223 (YDQ), 226 to 228 (YDQ), 235 to 237 (YDQ), 249 to 251 (YDQ), 288 to 290 (PVV), 310 to 319 (VEPTPTPVVE), 312 to 315 (PTPT), 316 to 318 (PVV), 322 to 324 (PVV), 330 to 339 (VEPTPTPVVE), 332 to 335 (PTPT), 336 to 338 (PVV), 354 to 358 (PQPTP), 385 to 389 (PTPVP), 396 to 400 (PQPTP), 402 to 404 (PVV), 413 to 415 (PVV), 424 to 428 (PTPAP), and 454 to 456 (PVV). The interval 98–251 (YDQVNNTFYD…NAYNTQNYDQ (154 aa)) is 9 X 3 AA repeats OF Y-D-Q. An 8 X 3 AA repeats of P-V-V region spans residues 160 to 456 (PVVDPDATPE…QTTPAVPPVV (297 aa)). A disordered region spans residues 177 to 197 (GLDPLPQAPDEYQDTTAPPAY). Positions 310–339 (VEPTPTPVVETAPVVEAPKVVEPTPTPVVE) are 2 X 10 AA repeats of V-E-P-T-P-T-P-V-V-E. The segment at 312–428 (PTPTPVVETA…PKVVTPTPAP (117 aa)) is 6 X 5 AA repeats of P-X-P-X-P.

The protein localises to the cell projection. Its subcellular location is the attachment organelle membrane. Functionally, component of the cytoskeleton-like structure which stabilizes the shape of the wall-less mycoplasma. This cytoskeleton-like network of accessory proteins containing HMW proteins 1 to 5 allows the proper anchoring of cytadhesin proteins in the mycoplasmal membrane at the attachment organelle. Essential for successful surface parasitism. The polypeptide is Cytadherence high molecular weight protein 3 (hmw3) (Mycoplasma pneumoniae (strain ATCC 29342 / M129 / Subtype 1) (Mycoplasmoides pneumoniae)).